The following is a 340-amino-acid chain: S-adenosylmethionine:tRNA ribosyltransferase-isomerase (340 aa).

The protein belongs to the QueA family. As to quaternary structure, monomer.

Its subcellular location is the cytoplasm. The enzyme catalyses 7-aminomethyl-7-carbaguanosine(34) in tRNA + S-adenosyl-L-methionine = epoxyqueuosine(34) in tRNA + adenine + L-methionine + 2 H(+). The protein operates within tRNA modification; tRNA-queuosine biosynthesis. Transfers and isomerizes the ribose moiety from AdoMet to the 7-aminomethyl group of 7-deazaguanine (preQ1-tRNA) to give epoxyqueuosine (oQ-tRNA). The polypeptide is S-adenosylmethionine:tRNA ribosyltransferase-isomerase (Francisella tularensis subsp. holarctica (strain OSU18)).